Consider the following 332-residue polypeptide: tRNA dimethylallyltransferase (332 aa).

ATP is bound at residue 30-37; it reads GPTAVGKT. Residue 32–37 coordinates substrate; sequence TAVGKT. An interaction with substrate tRNA region spans residues 57 to 60; it reads DSMQ.

Belongs to the IPP transferase family. Monomer. It depends on Mg(2+) as a cofactor.

It catalyses the reaction adenosine(37) in tRNA + dimethylallyl diphosphate = N(6)-dimethylallyladenosine(37) in tRNA + diphosphate. Functionally, catalyzes the transfer of a dimethylallyl group onto the adenine at position 37 in tRNAs that read codons beginning with uridine, leading to the formation of N6-(dimethylallyl)adenosine (i(6)A). The chain is tRNA dimethylallyltransferase from Natranaerobius thermophilus (strain ATCC BAA-1301 / DSM 18059 / JW/NM-WN-LF).